A 246-amino-acid chain; its full sequence is Mast cell protease 1 (246 aa).

Positions 1–18 are cleaved as a signal peptide; it reads MQALLFLMALLLPSGAGA. A propeptide spans 19-20 (activation peptide); sequence EE. Residues 21 to 244 enclose the Peptidase S1 domain; sequence IIGGVEARPH…YVPWIKTVIN (224 aa). Cysteine 50 and cysteine 66 are oxidised to a cystine. Histidine 65 serves as the catalytic Charge relay system. Asparagine 102 carries an N-linked (GlcNAc...) asparagine glycan. The Charge relay system role is filled by aspartate 109. 2 disulfide bridges follow: cysteine 143–cysteine 208 and cysteine 174–cysteine 187. The active-site Charge relay system is serine 202.

This sequence belongs to the peptidase S1 family. Granzyme subfamily. In terms of tissue distribution, mucosal mast cells.

The protein resides in the secreted. It localises to the cytoplasmic granule. Has a chymotrypsin-like activity. This chain is Mast cell protease 1 (Mcpt1), found in Mus musculus (Mouse).